The chain runs to 213 residues: Probable transaldolase (213 aa).

Catalysis depends on lysine 83, which acts as the Schiff-base intermediate with substrate.

It belongs to the transaldolase family. Type 3B subfamily.

It localises to the cytoplasm. The enzyme catalyses D-sedoheptulose 7-phosphate + D-glyceraldehyde 3-phosphate = D-erythrose 4-phosphate + beta-D-fructose 6-phosphate. It participates in carbohydrate degradation; pentose phosphate pathway; D-glyceraldehyde 3-phosphate and beta-D-fructose 6-phosphate from D-ribose 5-phosphate and D-xylulose 5-phosphate (non-oxidative stage): step 2/3. Functionally, transaldolase is important for the balance of metabolites in the pentose-phosphate pathway. This Oceanobacillus iheyensis (strain DSM 14371 / CIP 107618 / JCM 11309 / KCTC 3954 / HTE831) protein is Probable transaldolase.